We begin with the raw amino-acid sequence, 228 residues long: Phosphatidylglycerophosphate phosphatase PTPMT2 (228 aa).

The span at 1-10 (MTDETEEDDT) shows a compositional bias: acidic residues. The tract at residues 1–30 (MTDETEEDDTTQQRSSRNDGVSKNKGKGFK) is disordered. Residues Tyr-48 and Asp-126 each coordinate substrate. Residues 66–213 (WWDQIDEYLL…VEEFSRLQSP (148 aa)) form the Tyrosine-protein phosphatase domain. Cys-157 (phosphocysteine intermediate) is an active-site residue. Residues 157–163 (CKAGRGR) carry the Glucan phosphatase signature motif CXAGXGR motif. A substrate-binding site is contributed by 158–163 (KAGRGR).

Belongs to the protein-tyrosine phosphatase family. Non-receptor class dual specificity subfamily. As to expression, expressed in roots, leaves, stems and flowers. Expressed at low levels in stems and flowers.

The catalysed reaction is O-phospho-L-seryl-[protein] + H2O = L-seryl-[protein] + phosphate. It catalyses the reaction O-phospho-L-threonyl-[protein] + H2O = L-threonyl-[protein] + phosphate. It carries out the reaction O-phospho-L-tyrosyl-[protein] + H2O = L-tyrosyl-[protein] + phosphate. The enzyme catalyses a 1,2-diacyl-sn-glycero-3-phospho-(1'-sn-glycero-3'-phosphate) + H2O = a 1,2-diacyl-sn-glycero-3-phospho-(1'-sn-glycerol) + phosphate. It participates in phospholipid metabolism; phosphatidylglycerol biosynthesis; phosphatidylglycerol from CDP-diacylglycerol: step 2/2. Its function is as follows. Exhibits phosphatidylglycerophosphate phosphatase activity. Involved in root growth and columella cells organization. May possess protein phosphatase activity. In Arabidopsis thaliana (Mouse-ear cress), this protein is Phosphatidylglycerophosphate phosphatase PTPMT2.